The chain runs to 519 residues: ATP synthase subunit beta, mitochondrial (519 aa).

195–202 (GGAGVGKT) contributes to the ATP binding site.

Belongs to the ATPase alpha/beta chains family. In terms of assembly, F-type ATPases have 2 components, CF(1) - the catalytic core - and CF(0) - the membrane proton channel. CF(1) has five subunits: alpha(3), beta(3), gamma(1), delta(1), epsilon(1). CF(0) has three main subunits: a, b and c.

Its subcellular location is the mitochondrion. The protein localises to the mitochondrion inner membrane. The catalysed reaction is ATP + H2O + 4 H(+)(in) = ADP + phosphate + 5 H(+)(out). Mitochondrial membrane ATP synthase (F(1)F(0) ATP synthase or Complex V) produces ATP from ADP in the presence of a proton gradient across the membrane which is generated by electron transport complexes of the respiratory chain. F-type ATPases consist of two structural domains, F(1) - containing the extramembraneous catalytic core, and F(0) - containing the membrane proton channel, linked together by a central stalk and a peripheral stalk. During catalysis, ATP synthesis in the catalytic domain of F(1) is coupled via a rotary mechanism of the central stalk subunits to proton translocation. Subunits alpha and beta form the catalytic core in F(1). Rotation of the central stalk against the surrounding alpha(3)beta(3) subunits leads to hydrolysis of ATP in three separate catalytic sites on the beta subunits. This is ATP synthase subunit beta, mitochondrial (atp-2) from Neurospora crassa (strain ATCC 24698 / 74-OR23-1A / CBS 708.71 / DSM 1257 / FGSC 987).